A 220-amino-acid chain; its full sequence is Deoxyribose-phosphate aldolase 1 (220 aa).

Asp-89 functions as the Proton donor/acceptor in the catalytic mechanism. Catalysis depends on Lys-151, which acts as the Schiff-base intermediate with acetaldehyde. The active-site Proton donor/acceptor is the Lys-180.

The protein belongs to the DeoC/FbaB aldolase family. DeoC type 1 subfamily.

It is found in the cytoplasm. It carries out the reaction 2-deoxy-D-ribose 5-phosphate = D-glyceraldehyde 3-phosphate + acetaldehyde. It functions in the pathway carbohydrate degradation; 2-deoxy-D-ribose 1-phosphate degradation; D-glyceraldehyde 3-phosphate and acetaldehyde from 2-deoxy-alpha-D-ribose 1-phosphate: step 2/2. In terms of biological role, catalyzes a reversible aldol reaction between acetaldehyde and D-glyceraldehyde 3-phosphate to generate 2-deoxy-D-ribose 5-phosphate. The polypeptide is Deoxyribose-phosphate aldolase 1 (Staphylococcus aureus (strain COL)).